A 428-amino-acid chain; its full sequence is Dihydroorotase (428 aa).

Zn(2+)-binding residues include H59 and H61. Substrate contacts are provided by residues 61–63 (HFR) and N93. Residues D151, H178, and H231 each coordinate Zn(2+). N277 contacts substrate. D304 contributes to the Zn(2+) binding site. D304 is an active-site residue. Residues H308 and 322–323 (FG) each bind substrate.

This sequence belongs to the metallo-dependent hydrolases superfamily. DHOase family. Class I DHOase subfamily. In terms of assembly, homodimer. The cofactor is Zn(2+).

The enzyme catalyses (S)-dihydroorotate + H2O = N-carbamoyl-L-aspartate + H(+). The protein operates within pyrimidine metabolism; UMP biosynthesis via de novo pathway; (S)-dihydroorotate from bicarbonate: step 3/3. Its function is as follows. Catalyzes the reversible cyclization of carbamoyl aspartate to dihydroorotate. This chain is Dihydroorotase, found in Bacillus subtilis (strain 168).